The following is a 321-amino-acid chain: Thylakoid-associated protein sll1697 (321 aa).

The protein localises to the cellular thylakoid membrane. This Synechocystis sp. (strain ATCC 27184 / PCC 6803 / Kazusa) protein is Thylakoid-associated protein sll1697.